Reading from the N-terminus, the 467-residue chain is MFFSGLISKLHVHGTKRTNHFTIFHRLNHFVTTSSSSVTPLSPQDRNKLLATLLSNCTSLARVRRIHGDIFRSRILDQYPIAFLWNNIMRSYIRHESPLDAIQVYLGMVRSTVLPDRYSLPIVIKAAVQIHDFTLGKELHSVAVRLGFVGDEFCESGFITLYCKAGEFENARKVFDENPERKLGSWNAIIGGLNHAGRANEAVEMFVDMKRSGLEPDDFTMVSVTASCGGLGDLSLAFQLHKCVLQAKTEEKSDIMMLNSLIDMYGKCGRMDLASHIFEEMRQRNVVSWSSMIVGYAANGNTLEALECFRQMREFGVRPNKITFVGVLSACVHGGLVEEGKTYFAMMKSEFELEPGLSHYGCIVDLLSRDGQLKEAKKVVEEMPMKPNVMVWGCLMGGCEKFGDVEMAEWVAPYMVELEPWNDGVYVVLANVYALRGMWKDVERVRKLMKTKKVAKIPAYSYASTTF.

Residues 1–30 (MFFSGLISKLHVHGTKRTNHFTIFHRLNHF) constitute a mitochondrion transit peptide. PPR repeat units follow at residues 81 to 115 (IAFL…TVLP), 116 to 150 (DRYS…GFVG), 151 to 181 (DEFC…NPER), 182 to 216 (KLGS…GLEP), 217 to 251 (DDFT…KTEE), 254 to 284 (DIMM…MRQR), 285 to 319 (NVVS…GVRP), 320 to 350 (NKIT…MKSE), and 356 to 386 (GLSH…MPMK). The tract at residues 391–466 (VWGCLMGGCE…IPAYSYASTT (76 aa)) is type E motif.

Belongs to the PPR family. PCMP-E subfamily.

It localises to the mitochondrion. The chain is Pentatricopeptide repeat-containing protein At1g77170, mitochondrial (PCMP-E21) from Arabidopsis thaliana (Mouse-ear cress).